Reading from the N-terminus, the 170-residue chain is Adenine phosphoribosyltransferase (170 aa).

Belongs to the purine/pyrimidine phosphoribosyltransferase family. Homodimer.

Its subcellular location is the cytoplasm. The enzyme catalyses AMP + diphosphate = 5-phospho-alpha-D-ribose 1-diphosphate + adenine. It functions in the pathway purine metabolism; AMP biosynthesis via salvage pathway; AMP from adenine: step 1/1. Its function is as follows. Catalyzes a salvage reaction resulting in the formation of AMP, that is energically less costly than de novo synthesis. The protein is Adenine phosphoribosyltransferase of Symbiobacterium thermophilum (strain DSM 24528 / JCM 14929 / IAM 14863 / T).